The following is a 380-amino-acid chain: Methylthioribose-1-phosphate isomerase (380 aa).

Asp257 acts as the Proton donor in catalysis.

Belongs to the eIF-2B alpha/beta/delta subunits family. MtnA subfamily.

Its subcellular location is the cytoplasm. It localises to the nucleus. It carries out the reaction 5-(methylsulfanyl)-alpha-D-ribose 1-phosphate = 5-(methylsulfanyl)-D-ribulose 1-phosphate. It participates in amino-acid biosynthesis; L-methionine biosynthesis via salvage pathway; L-methionine from S-methyl-5-thio-alpha-D-ribose 1-phosphate: step 1/6. In terms of biological role, catalyzes the interconversion of methylthioribose-1-phosphate (MTR-1-P) into methylthioribulose-1-phosphate (MTRu-1-P). This is Methylthioribose-1-phosphate isomerase from Naegleria gruberi (Amoeba).